Here is a 112-residue protein sequence, read N- to C-terminus: MNFDMSKLVQQAQKMQEQMKKAQQERENMEVIGESGAGLVTVTMTGKYDVKSVSIDNSLMSEDKEILEDLIAAAVNSAVKKVEENSTASSDIYKMAKDAGIDLPSGINFPFK.

This sequence belongs to the YbaB/EbfC family. Homodimer.

It localises to the cytoplasm. The protein resides in the nucleoid. Functionally, binds to DNA and alters its conformation. May be involved in regulation of gene expression, nucleoid organization and DNA protection. This is Nucleoid-associated protein FTM_1023 from Francisella tularensis subsp. mediasiatica (strain FSC147).